The following is a 283-amino-acid chain: Movement protein (283 aa).

This sequence belongs to the tenuiviruses pc4 protein family.

In terms of biological role, transports viral genome to neighboring plant cells directly through plasmosdesmata, without any budding. The movement protein allows efficient cell to cell propagation, by bypassing the host cell wall barrier. The chain is Movement protein from Maize stripe virus (MStV).